We begin with the raw amino-acid sequence, 848 residues long: Translation initiation factor IF-2 (848 aa).

Positions 1–20 (MNESKGAVDSGLMSGKTERT) are disordered. Positions 346–516 (PRAPVVTVMG…LLMAELLELK (171 aa)) constitute a tr-type G domain. The segment at 355 to 362 (GHVDHGKT) is G1. 355 to 362 (GHVDHGKT) is a binding site for GTP. A G2 region spans residues 380-384 (GITQH). The tract at residues 402 to 405 (DTPG) is G3. GTP is bound by residues 402 to 406 (DTPGH) and 456 to 459 (NKID). The interval 456 to 459 (NKID) is G4. The segment at 492–494 (SAK) is G5.

Belongs to the TRAFAC class translation factor GTPase superfamily. Classic translation factor GTPase family. IF-2 subfamily.

Its subcellular location is the cytoplasm. One of the essential components for the initiation of protein synthesis. Protects formylmethionyl-tRNA from spontaneous hydrolysis and promotes its binding to the 30S ribosomal subunits. Also involved in the hydrolysis of GTP during the formation of the 70S ribosomal complex. The protein is Translation initiation factor IF-2 of Ehrlichia canis (strain Jake).